The chain runs to 245 residues: P2Y purinoceptor 13 (245 aa).

At 1 to 9 (QLRAFVCRL) the chain is on the extracellular side. Residues cysteine 7 and cysteine 85 are joined by a disulfide bond. A helical transmembrane segment spans residues 10–30 (SSVIFYETMYVGIVLLGLIAF). At 31-35 (DRFLK) the chain is on the cytoplasmic side. The chain crosses the membrane as a helical span at residues 36 to 56 (IIRPLRNIFLKKTVFAKTVSV). The Extracellular segment spans residues 57–85 (FIWSFFFFISLPNMILSNKEATPSSVKKC). The helical transmembrane segment at 86 to 106 (ASLKGPLGLKWHQIVNNISQF) threads the bilayer. The Cytoplasmic portion of the chain corresponds to 107-126 (IFWTVFVLMLVFYVVIAKKV). The chain crosses the membrane as a helical span at residues 127 to 147 (YDSYRKSKSKDRKNNKKLEGK). The Extracellular segment spans residues 148–174 (VFVVVAVFFVCFAPFHFTRVPYTYSQT). A helical membrane pass occupies residues 175 to 195 (NNKTDCRLQNQLFIAKETTLF). Over 196-245 (LAATNICMDPLIYIFLCKKFTEKLPCMRGRKTIASSQENQSSQTDNITLG) the chain is Cytoplasmic.

This sequence belongs to the G-protein coupled receptor 1 family.

The protein localises to the cell membrane. Functionally, receptor for ADP. Coupled to G(i)-proteins. May play a role in hematopoiesis and the immune system. In Macaca fascicularis (Crab-eating macaque), this protein is P2Y purinoceptor 13 (P2RY13).